The primary structure comprises 22 residues: thr operon leader peptide (22 aa).

The protein belongs to the thr operon leader peptide family.

Functionally, this protein is involved in control of the biosynthesis of threonine. This Yersinia pestis bv. Antiqua (strain Antiqua) protein is thr operon leader peptide.